The primary structure comprises 258 residues: Retron Ec83 putative HNH endonuclease (258 aa).

Functionally, putative HNH endonuclease component of antiviral defense system retron Ec83, composed of a non-coding RNA (ncRNA), a reverse transcriptase (RT), a probable ATPase and this protein. Expression of retron Ec78 confers protection against bacteriophage T2, T4 and T6. At multiplicity of infection (MOI) of 0.02 cultures slow growth when infected with T4 but do not collapse, at MOI 2 cultures enter growth stasis. In Escherichia coli, this protein is Retron Ec83 putative HNH endonuclease.